The chain runs to 189 residues: Putative manganese efflux pump MntP (189 aa).

6 consecutive transmembrane segments (helical) span residues 3-23 (LSATIILAFAMSMDAFAASIG), 41-61 (LIFGVIEAITPLIGWCIGLFA), 65-85 (IMEWDHWIAFSLLFILGCRMI), 104-124 (FWVLVTTAIATSLDAMAIGVG), 132-152 (IVHTAMAIGLATMIMATLGML), and 167-187 (IIGGIVLIGIGFNILYEHMHL).

This sequence belongs to the MntP (TC 9.B.29) family.

It localises to the cell inner membrane. In terms of biological role, probably functions as a manganese efflux pump. This is Putative manganese efflux pump MntP from Yersinia pseudotuberculosis serotype O:1b (strain IP 31758).